A 274-amino-acid chain; its full sequence is MIEIKKAKPTSPGRRHVVSVKNTELHTGKPFKGLVEVKKSKAGRNNTGRITVRHQGGGHKQHYRIVDFKRNKDDITAKVERIEYDPNRSANIALVLYADGERRYIVAPKGLKKDMSVISGEKVDIAVGNCMPLRNIPLGTVIHNIEMKPKKGAQMIRSAGTFAQLVGKDNAYAIIRLRSGEMRRVLLDCRAVIGVVSNSEHNLKSLGKAGAKRWRGIRPTVRGVAMNPVDHPHGGGEGRTSGGRHPVTPWGIPTKGYKTRRNKRSNKLIVQKRK.

Residues 224-274 are disordered; sequence VAMNPVDHPHGGGEGRTSGGRHPVTPWGIPTKGYKTRRNKRSNKLIVQKRK. Residues 257–274 show a composition bias toward basic residues; it reads YKTRRNKRSNKLIVQKRK.

It belongs to the universal ribosomal protein uL2 family. Part of the 50S ribosomal subunit. Forms a bridge to the 30S subunit in the 70S ribosome.

Its function is as follows. One of the primary rRNA binding proteins. Required for association of the 30S and 50S subunits to form the 70S ribosome, for tRNA binding and peptide bond formation. It has been suggested to have peptidyltransferase activity; this is somewhat controversial. Makes several contacts with the 16S rRNA in the 70S ribosome. The chain is Large ribosomal subunit protein uL2 from Francisella tularensis subsp. holarctica (strain FTNF002-00 / FTA).